Reading from the N-terminus, the 181-residue chain is Malignant T-cell-amplified sequence 1-B (181 aa).

One can recognise a PUA domain in the interval 92-171; sequence LPHQQVDKGA…IGIENIHYLN (80 aa).

The protein belongs to the MCTS1 family.

The protein resides in the cytoplasm. In terms of biological role, plays a role as translation enhancer and involved in cell cycle regulation. This chain is Malignant T-cell-amplified sequence 1-B (mcts1-b), found in Xenopus laevis (African clawed frog).